Reading from the N-terminus, the 162-residue chain is Phenazine biosynthesis protein PhzB1 (162 aa).

Belongs to the PhzA/PhzB family. In terms of assembly, homodimer.

It participates in antibiotic biosynthesis; phenazine biosynthesis. Functionally, involved in the biosynthesis of the antibiotic phenazine, a nitrogen-containing heterocyclic molecule. PhzB1 (operon phzA1B1C1E1F1G1) has a role in the biosynthesis of the phenazine during planktonic growth. The chain is Phenazine biosynthesis protein PhzB1 from Pseudomonas aeruginosa (strain ATCC 15692 / DSM 22644 / CIP 104116 / JCM 14847 / LMG 12228 / 1C / PRS 101 / PAO1).